Reading from the N-terminus, the 81-residue chain is uncharacterized protein (81 aa).

This is an uncharacterized protein from Caenorhabditis elegans.